The sequence spans 105 residues: Nitrogen fixation nifHD2 region GlnB-like protein 1 (105 aa).

It belongs to the P(II) protein family.

Its function is as follows. Could be involved in the regulation of nitrogen fixation. In Methanosarcina barkeri, this protein is Nitrogen fixation nifHD2 region GlnB-like protein 1.